The following is a 420-amino-acid chain: Coiled-coil domain-containing protein 85C (420 aa).

The residue at position 2 (Ala2) is an N-acetylalanine. 2 coiled-coil regions span residues Glu26–Cys92 and His122–Ala165. The disordered stretch occupies residues Ala165–Tyr271. The segment covering Gly166–Gly176 has biased composition (gly residues). The residue at position 179 (Ser179) is a Phosphoserine. Residues Ala185–Ala212 show a composition bias toward low complexity. Phosphoserine is present on Ser247.

This sequence belongs to the CCDC85 family. In terms of assembly, may interact with ARVCF, CTNND1, CTNND2 and PKP4. Predominantly expressed on the surface of the lateral ventricular walls of the developing cerebral cortex.

The protein localises to the cell junction. The protein resides in the tight junction. It localises to the adherens junction. Functionally, may play a role in cell-cell adhesion and epithelium development through its interaction with proteins of the beta-catenin family. May play an important role in cortical development, especially in the maintenance of radial glia. This Mus musculus (Mouse) protein is Coiled-coil domain-containing protein 85C (Ccdc85c).